Here is a 426-residue protein sequence, read N- to C-terminus: Glutamate-1-semialdehyde 2,1-aminomutase (426 aa).

An N6-(pyridoxal phosphate)lysine modification is found at lysine 265.

Belongs to the class-III pyridoxal-phosphate-dependent aminotransferase family. HemL subfamily. In terms of assembly, homodimer. Pyridoxal 5'-phosphate serves as cofactor.

The protein localises to the cytoplasm. It catalyses the reaction (S)-4-amino-5-oxopentanoate = 5-aminolevulinate. Its pathway is porphyrin-containing compound metabolism; protoporphyrin-IX biosynthesis; 5-aminolevulinate from L-glutamyl-tRNA(Glu): step 2/2. This Pseudoalteromonas translucida (strain TAC 125) protein is Glutamate-1-semialdehyde 2,1-aminomutase.